Consider the following 404-residue polypeptide: Na(+)/H(+) antiporter NhaA 2 (404 aa).

The next 11 membrane-spanning stretches (helical) occupy residues 24 to 44 (GIIL…SFSG), 67 to 87 (VLHW…GMEI), 103 to 123 (ILPI…YALF), 132 to 152 (GWGI…SLVA), 161 to 181 (VFLT…IAIF), 184 to 204 (SQIS…LILA), 216 to 236 (IILG…ATIA), 266 to 286 (TPWS…GIII), 303 to 323 (IIFG…FILI), 339 to 359 (LYGA…VSSL), and 372 to 392 (MCIM…FKFI).

The protein belongs to the NhaA Na(+)/H(+) (TC 2.A.33) antiporter family.

The protein localises to the cell membrane. The enzyme catalyses Na(+)(in) + 2 H(+)(out) = Na(+)(out) + 2 H(+)(in). Functionally, na(+)/H(+) antiporter that extrudes sodium in exchange for external protons. The protein is Na(+)/H(+) antiporter NhaA 2 of Clostridium beijerinckii (strain ATCC 51743 / NCIMB 8052) (Clostridium acetobutylicum).